We begin with the raw amino-acid sequence, 154 residues long: Large ribosomal subunit protein uL13 (154 aa).

Belongs to the universal ribosomal protein uL13 family. Part of the 50S ribosomal subunit.

In terms of biological role, this protein is one of the early assembly proteins of the 50S ribosomal subunit, although it is not seen to bind rRNA by itself. It is important during the early stages of 50S assembly. In Rhizobium johnstonii (strain DSM 114642 / LMG 32736 / 3841) (Rhizobium leguminosarum bv. viciae), this protein is Large ribosomal subunit protein uL13.